We begin with the raw amino-acid sequence, 539 residues long: Hydroxylamine reductase (539 aa).

[4Fe-4S] cluster-binding residues include Cys-3, Cys-6, Cys-13, and Cys-19. The hybrid [4Fe-2O-2S] cluster site is built by His-240, Glu-264, Cys-308, Cys-395, Cys-423, Cys-448, Glu-482, and Lys-484. Cys-395 carries the cysteine persulfide modification.

The protein belongs to the HCP family. [4Fe-4S] cluster serves as cofactor. Hybrid [4Fe-2O-2S] cluster is required as a cofactor.

Its subcellular location is the cytoplasm. The enzyme catalyses A + NH4(+) + H2O = hydroxylamine + AH2 + H(+). In terms of biological role, catalyzes the reduction of hydroxylamine to form NH(3) and H(2)O. This is Hydroxylamine reductase from Thermodesulfovibrio yellowstonii (strain ATCC 51303 / DSM 11347 / YP87).